The sequence spans 65 residues: Small ribosomal subunit protein bS21 (65 aa).

Positions Glu39–Asp65 are disordered. A compositionally biased stretch (basic residues) spans Ile43–Asp65.

The protein belongs to the bacterial ribosomal protein bS21 family.

The protein is Small ribosomal subunit protein bS21 of Pelobacter propionicus (strain DSM 2379 / NBRC 103807 / OttBd1).